The chain runs to 147 residues: Large ribosomal subunit protein uL16 (147 aa).

This sequence belongs to the universal ribosomal protein uL16 family. As to quaternary structure, part of the 50S ribosomal subunit.

Binds 23S rRNA and is also seen to make contacts with the A and possibly P site tRNAs. The polypeptide is Large ribosomal subunit protein uL16 (Caldicellulosiruptor saccharolyticus (strain ATCC 43494 / DSM 8903 / Tp8T 6331)).